The primary structure comprises 261 residues: Secreted RxLR effector protein 154 (261 aa).

The N-terminal stretch at 1–18 is a signal peptide; that stretch reads MRRCALLFRLFLISYSCS. A RxLR-dEER motif is present at residues 49–64; it reads RILQADDPEHIRTEER.

The protein belongs to the RxLR effector family.

The protein resides in the secreted. It localises to the host cell membrane. Functionally, secreted effector that completely suppresses the host cell death induced by cell death-inducing proteins. This Plasmopara viticola (Downy mildew of grapevine) protein is Secreted RxLR effector protein 154.